The primary structure comprises 58 residues: Small ribosomal subunit protein bS21 (58 aa).

A disordered region spans residues 37 to 58 (FYEKPSVKRKRKSEAARKRKKF). Over residues 43–58 (VKRKRKSEAARKRKKF) the composition is skewed to basic residues.

The protein belongs to the bacterial ribosomal protein bS21 family.

The chain is Small ribosomal subunit protein bS21 from Streptococcus sanguinis (strain SK36).